The following is a 64-amino-acid chain: DNA gyrase inhibitor YacG (64 aa).

Residues Cys-7, Cys-10, Cys-26, and Cys-30 each coordinate Zn(2+). The interval 44–64 (SIPGEPVVIANDDYNNEESDY) is disordered.

The protein belongs to the DNA gyrase inhibitor YacG family. Interacts with GyrB. Zn(2+) is required as a cofactor.

Inhibits all the catalytic activities of DNA gyrase by preventing its interaction with DNA. Acts by binding directly to the C-terminal domain of GyrB, which probably disrupts DNA binding by the gyrase. This chain is DNA gyrase inhibitor YacG, found in Idiomarina loihiensis (strain ATCC BAA-735 / DSM 15497 / L2-TR).